Consider the following 248-residue polypeptide: Stress-related protein (248 aa).

This sequence belongs to the REF/SRPP family.

This Vitis riparia (Frost grape) protein is Stress-related protein (SRP).